Consider the following 542-residue polypeptide: Cytochrome P450 79B1 (542 aa).

The helical transmembrane segment at Phe-21–Leu-41 threads the bilayer. Cys-478 serves as a coordination point for heme.

The protein belongs to the cytochrome P450 family. The cofactor is heme.

It localises to the membrane. Functionally, converts tyrosine to para-hydrophenylacetaldoxime in para-hydroxybenzylglucosinolate biosynthesis. This is Cytochrome P450 79B1 (CYP79B1) from Sinapis alba (White mustard).